The following is a 66-amino-acid chain: Large ribosomal subunit protein bL33B (66 aa).

Belongs to the bacterial ribosomal protein bL33 family.

The chain is Large ribosomal subunit protein bL33B from Synechococcus sp. (strain CC9605).